Consider the following 387-residue polypeptide: Fructose-1,6-bisphosphate aldolase/phosphatase (387 aa).

Asp-13 serves as the catalytic Proton acceptor; for FBP phosphatase activity. Mg(2+) contacts are provided by Asp-13, His-20, Asp-54, and Asp-55. His-20 is a binding site for beta-D-fructose 1,6-bisphosphate. His-20 serves as a coordination point for dihydroxyacetone phosphate. Tyr-92 provides a ligand contact to beta-D-fructose 1,6-bisphosphate. A Mg(2+)-binding site is contributed by Gln-96. Residue 105–106 (GN) coordinates beta-D-fructose 1,6-bisphosphate. Asp-133 is a Mg(2+) binding site. Lys-134 is a binding site for beta-D-fructose 1,6-bisphosphate. Lys-134 provides a ligand contact to dihydroxyacetone phosphate. Tyr-229 (proton donor/acceptor; for FBP aldolase activity) is an active-site residue. Lys-232, Asp-233, and Asp-234 together coordinate Mg(2+). The active-site Schiff-base intermediate with DHAP; for FBP aldolase activity is Lys-232. Residues 242–243 (QS), Arg-266, Asp-287, and Tyr-348 contribute to the beta-D-fructose 1,6-bisphosphate site. Dihydroxyacetone phosphate contacts are provided by Arg-266 and Asp-287.

Belongs to the FBP aldolase/phosphatase family. As to quaternary structure, homooctamer; dimer of tetramers. Mg(2+) is required as a cofactor.

The enzyme catalyses beta-D-fructose 1,6-bisphosphate + H2O = beta-D-fructose 6-phosphate + phosphate. It carries out the reaction beta-D-fructose 1,6-bisphosphate = D-glyceraldehyde 3-phosphate + dihydroxyacetone phosphate. Its pathway is carbohydrate biosynthesis; gluconeogenesis. Catalyzes two subsequent steps in gluconeogenesis: the aldol condensation of dihydroxyacetone phosphate (DHAP) and glyceraldehyde-3-phosphate (GA3P) to fructose-1,6-bisphosphate (FBP), and the dephosphorylation of FBP to fructose-6-phosphate (F6P). This is Fructose-1,6-bisphosphate aldolase/phosphatase from Ignicoccus hospitalis (strain KIN4/I / DSM 18386 / JCM 14125).